We begin with the raw amino-acid sequence, 280 residues long: Protease HtpX (280 aa).

2 helical membrane-spanning segments follow: residues Thr-7–Gly-26 and Gly-30–Ser-49. Residue His-129 coordinates Zn(2+). Glu-130 is a catalytic residue. His-133 provides a ligand contact to Zn(2+). Transmembrane regions (helical) follow at residues Ala-146–Gly-166 and Val-178–Ile-198. Glu-203 contributes to the Zn(2+) binding site.

The protein belongs to the peptidase M48B family. Zn(2+) serves as cofactor.

The protein resides in the cell inner membrane. This is Protease HtpX from Legionella pneumophila subsp. pneumophila (strain Philadelphia 1 / ATCC 33152 / DSM 7513).